Consider the following 301-residue polypeptide: Mitochondrial import receptor subunit TOM40 homolog (301 aa).

A disordered region spans residues 1–20 (MATPTESEFAAPIPQTNPGS).

It belongs to the Tom40 family. As to quaternary structure, forms part of the preprotein translocase complex of the outer mitochondrial membrane (TOM complex). Interacts with mitochondrial targeting sequences.

Its subcellular location is the mitochondrion outer membrane. Functionally, channel-forming protein essential for import of protein precursors into mitochondria. Specifically required for nnt-1 accumulation in the mitochondria and may be involved in the secretion of daf-28/insulin from the mitochondria. Required for embryonic and larval development. The chain is Mitochondrial import receptor subunit TOM40 homolog from Caenorhabditis briggsae.